The chain runs to 211 residues: Large ribosomal subunit protein uL3 (211 aa).

N5-methylglutamine is present on Gln150.

It belongs to the universal ribosomal protein uL3 family. Part of the 50S ribosomal subunit. Forms a cluster with proteins L14 and L19. Methylated by PrmB.

Functionally, one of the primary rRNA binding proteins, it binds directly near the 3'-end of the 23S rRNA, where it nucleates assembly of the 50S subunit. The protein is Large ribosomal subunit protein uL3 of Stutzerimonas stutzeri (strain A1501) (Pseudomonas stutzeri).